The chain runs to 295 residues: Uridine and thymidine phosphorylase (295 aa).

Phosphate is bound by residues Arg81 and 125-128; that span reads RLGT. Substrate is bound by residues Gln203 and Arg205.

The protein belongs to the PNP/UDP phosphorylase family. As to expression, expressed in hypodermis, pharynx, spermatheca and gonad.

It carries out the reaction uridine + phosphate = alpha-D-ribose 1-phosphate + uracil. The enzyme catalyses thymidine + phosphate = 2-deoxy-alpha-D-ribose 1-phosphate + thymine. It catalyses the reaction 2'-deoxyuridine + phosphate = 2-deoxy-alpha-D-ribose 1-phosphate + uracil. The protein operates within pyrimidine metabolism; UMP biosynthesis via salvage pathway; uracil from uridine (phosphorylase route): step 1/1. It functions in the pathway pyrimidine metabolism; dTMP biosynthesis via salvage pathway; dTMP from thymine: step 1/2. Its function is as follows. Catalyzes the reversible phosphorylytic cleavage of uridine and thymidine to uracil and ribose-phosphate or thymine and deoxyribose-1-phosphate. The produced molecules are then utilized as carbon and energy sources or in the rescue of pyrimidine bases for nucleotide synthesis. Required for normal lifespan. The protein is Uridine and thymidine phosphorylase of Caenorhabditis elegans.